The following is a 188-amino-acid chain: Elongation factor P (188 aa).

The protein belongs to the elongation factor P family.

The protein resides in the cytoplasm. It participates in protein biosynthesis; polypeptide chain elongation. In terms of biological role, involved in peptide bond synthesis. Stimulates efficient translation and peptide-bond synthesis on native or reconstituted 70S ribosomes in vitro. Probably functions indirectly by altering the affinity of the ribosome for aminoacyl-tRNA, thus increasing their reactivity as acceptors for peptidyl transferase. The polypeptide is Elongation factor P (Rhodopseudomonas palustris (strain BisB5)).